A 76-amino-acid polypeptide reads, in one-letter code: Small ribosomal subunit protein bS18 (76 aa).

The protein belongs to the bacterial ribosomal protein bS18 family. In terms of assembly, part of the 30S ribosomal subunit. Forms a tight heterodimer with protein bS6.

In terms of biological role, binds as a heterodimer with protein bS6 to the central domain of the 16S rRNA, where it helps stabilize the platform of the 30S subunit. This chain is Small ribosomal subunit protein bS18, found in Aeromonas salmonicida (strain A449).